We begin with the raw amino-acid sequence, 360 residues long: Peptide chain release factor 1 (360 aa).

Glutamine 237 is subject to N5-methylglutamine.

This sequence belongs to the prokaryotic/mitochondrial release factor family. Methylated by PrmC. Methylation increases the termination efficiency of RF1.

Its subcellular location is the cytoplasm. In terms of biological role, peptide chain release factor 1 directs the termination of translation in response to the peptide chain termination codons UAG and UAA. This Pseudomonas entomophila (strain L48) protein is Peptide chain release factor 1.